A 400-amino-acid polypeptide reads, in one-letter code: MLKKFFKEISYKKSYVLAFSGGLDSTVLLHMISLYIKKIKNNNNFFKKIFKFRAVYINHNICKESKYWSNHCHDQCLKYKVFFKSINIFISDFSEGIESSARRERYKALFSDLNPEEVLITAHHQDDQIETILLSLKRGSGPRGISGMQSIKKFDSHIIKRPLLHCKKEDIKLYAIKHNLNWIDDKSNLNIKFDRNFLRSEIIPLLKKRWPNIGNTISRSAKLCFDQEKLLNELLKDTLNSLVEKDKSLKFIELFKMSEIKRFAILRKWFCLNNFKMPSLSQLKHIWKNVIISKKDSKAEIKINNNIIKRFKKNLYFIPIYSKNHLKNIIFKTSLNHSKKIVLPYDLGTLITKPIMINENFIKKINFFYYNNKKKFIFLINLNYMKKMSFTVKLWILFIC.

An ATP-binding site is contributed by 20-25 (SGGLDS).

The protein belongs to the tRNA(Ile)-lysidine synthase family.

The protein localises to the cytoplasm. It carries out the reaction cytidine(34) in tRNA(Ile2) + L-lysine + ATP = lysidine(34) in tRNA(Ile2) + AMP + diphosphate + H(+). Functionally, ligates lysine onto the cytidine present at position 34 of the AUA codon-specific tRNA(Ile) that contains the anticodon CAU, in an ATP-dependent manner. Cytidine is converted to lysidine, thus changing the amino acid specificity of the tRNA from methionine to isoleucine. The chain is tRNA(Ile)-lysidine synthase from Wigglesworthia glossinidia brevipalpis.